We begin with the raw amino-acid sequence, 101 residues long: Enhancer of yellow 2 transcription factor (101 aa).

The protein belongs to the ENY2 family. In terms of assembly, component of the nuclear pore complex (NPC)-associated AMEX complex (anchoring and mRNA export complex), composed of at least e(y)2 and xmas-2. Component of the SAGA transcription coactivator-HAT complexes, at least composed of Ada2b, e(y)2, Pcaf/Gcn5, Taf10 and Nipped-A/Trrap. Within the SAGA complex, e(y)2, Sgf11, and not/nonstop form an additional subcomplex of SAGA called the DUB module (deubiquitination module). Component of the THO complex, composed of at least e(y)2, HPR1, THO2, THOC5, THOC6 and THOC7. Interacts with e(y)1. Interacts with su(Hw) (via zinc fingers). Interacts with xmas-2; required for localization to the nuclear periphery. Interacts with the nuclear pore complex (NPC).

It localises to the nucleus. The protein localises to the nucleoplasm. The protein resides in the cytoplasm. Involved in mRNA export coupled transcription activation by association with both the AMEX and the SAGA complexes. The SAGA complex is a multiprotein complex that activates transcription by remodeling chromatin and mediating histone acetylation and deubiquitination. Within the SAGA complex, participates in a subcomplex that specifically deubiquitinates histone H2B. The SAGA complex is recruited to specific gene promoters by activators, where it is required for transcription. Required for nuclear receptor-mediated transactivation. Involved in transcription elongation by recruiting the THO complex onto nascent mRNA. The AMEX complex functions in docking export-competent ribonucleoprotein particles (mRNPs) to the nuclear entrance of the nuclear pore complex (nuclear basket). AMEX participates in mRNA export and accurate chromatin positioning in the nucleus by tethering genes to the nuclear periphery. In Drosophila yakuba (Fruit fly), this protein is Enhancer of yellow 2 transcription factor.